The following is a 177-amino-acid chain: Interleukin-1 receptor antagonist protein (177 aa).

Residues 1–25 form the signal peptide; that stretch reads MEIRRRSVRHLISLLLFLFYSETAC. An intrachain disulfide couples Cys91 to Cys141. N-linked (GlcNAc...) asparagine glycosylation occurs at Asn109.

This sequence belongs to the IL-1 family.

The protein resides in the secreted. In terms of biological role, anti-inflammatory antagonist of interleukin-1 family of proinflammatory cytokines such as interleukin-1beta/IL1B and interleukin-1alpha/IL1A. Protects from immune dysregulation and uncontrolled systemic inflammation triggered by IL1 for a range of innate stimulatory agents such as pathogens. This Equus caballus (Horse) protein is Interleukin-1 receptor antagonist protein (IL1RN).